The sequence spans 391 residues: Pyruvate dehydrogenase E1 component subunit alpha, testis-specific form, mitochondrial (391 aa).

The transit peptide at Met-1–Lys-30 directs the protein to the mitochondrion. Pyruvate-binding residues include His-93, Tyr-119, Arg-120, Ala-158, Gly-166, Val-168, Asp-197, Gly-198, Ala-199, Asn-226, and Tyr-228. Tyr-119 and Arg-120 together coordinate thiamine diphosphate. Thiamine diphosphate is bound by residues Gly-166, Val-168, Asp-197, Gly-198, Ala-199, and Asn-226. Asp-197 provides a ligand contact to Mg(2+). Mg(2+) contacts are provided by Asn-226 and Tyr-228. Position 293 (His-293) interacts with thiamine diphosphate. Residues Ser-294 and Ser-296 each carry the phosphoserine modification. Ser-301 is modified (phosphoserine; by PDK3).

As to quaternary structure, heterotetramer of two PDHA2 and two PDHB subunits. The heterotetramer interacts with DLAT, and is part of the multimeric pyruvate dehydrogenase complex that contains multiple copies of pyruvate dehydrogenase (E1), dihydrolipoamide acetyltransferase (DLAT, E2) and lipoamide dehydrogenase (DLD, E3). These subunits are bound to an inner core composed of about 48 DLAT and 12 PDHX molecules. Thiamine diphosphate is required as a cofactor. It depends on Mg(2+) as a cofactor. In terms of tissue distribution, testis.

The protein resides in the mitochondrion matrix. It catalyses the reaction N(6)-[(R)-lipoyl]-L-lysyl-[protein] + pyruvate + H(+) = N(6)-[(R)-S(8)-acetyldihydrolipoyl]-L-lysyl-[protein] + CO2. With respect to regulation, pyruvate dehydrogenase activity is inhibited by phosphorylation of PDHA2; it is reactivated by dephosphorylation. In terms of biological role, the pyruvate dehydrogenase complex catalyzes the overall conversion of pyruvate to acetyl-CoA and CO(2), and thereby links the glycolytic pathway to the tricarboxylic cycle. In Rattus norvegicus (Rat), this protein is Pyruvate dehydrogenase E1 component subunit alpha, testis-specific form, mitochondrial (Pdha2).